Consider the following 208-residue polypeptide: Imidazoleglycerol-phosphate dehydratase (208 aa).

The disordered stretch occupies residues 1-22 (MTRRAAVKAPRAGAAARRGSVA). The span at 7 to 19 (VKAPRAGAAARRG) shows a compositional bias: low complexity.

The protein belongs to the imidazoleglycerol-phosphate dehydratase family.

It is found in the cytoplasm. It catalyses the reaction D-erythro-1-(imidazol-4-yl)glycerol 3-phosphate = 3-(imidazol-4-yl)-2-oxopropyl phosphate + H2O. It participates in amino-acid biosynthesis; L-histidine biosynthesis; L-histidine from 5-phospho-alpha-D-ribose 1-diphosphate: step 6/9. In Anaeromyxobacter dehalogenans (strain 2CP-C), this protein is Imidazoleglycerol-phosphate dehydratase.